Consider the following 62-residue polypeptide: uncharacterized protein (62 aa).

This is an uncharacterized protein from Potato leafroll virus (strain Potato/Scotland/strain 1/1984) (PLrV).